Here is a 423-residue protein sequence, read N- to C-terminus: Glycine amidinotransferase, mitochondrial (423 aa).

The N-terminal 48 residues, 1–48 (MLRVRCLRGGSRGAEAVHYIGSRLGRTLTGWVQRTFQSTQAATASSRN), are a transit peptide targeting the mitochondrion. The span at 39 to 51 (TQAATASSRNSSA) shows a compositional bias: low complexity. The segment at 39-65 (TQAATASSRNSSAADDKATEPLPKDCP) is disordered. Serine 46 and serine 49 each carry phosphoserine. Basic and acidic residues predominate over residues 52–61 (ADDKATEPLP). Aspartate 170 contributes to the arginine binding site. Active-site residues include aspartate 254 and histidine 303. 4 residues coordinate arginine: aspartate 305, arginine 322, serine 354, and serine 355. At lysine 385 the chain carries N6-acetyllysine. Cysteine 407 (amidino-cysteine intermediate) is an active-site residue.

This sequence belongs to the amidinotransferase family. In terms of assembly, homodimer.

Its subcellular location is the mitochondrion inner membrane. It carries out the reaction L-arginine + glycine = guanidinoacetate + L-ornithine. It catalyses the reaction 4-aminobutanoate + L-arginine = 4-guanidinobutanoate + L-ornithine. The enzyme catalyses beta-alanine + L-arginine = 3-guanidinopropanoate + L-ornithine. The catalysed reaction is taurine + L-arginine = taurocyamine + L-ornithine. It functions in the pathway amine and polyamine biosynthesis; creatine biosynthesis; creatine from L-arginine and glycine: step 1/2. In terms of biological role, transamidinase that catalyzes the transfer of the amidino group of L-arginine onto the amino moiety of acceptor metabolites such as glycine, beta-alanine, gamma-aminobutyric acid (GABA) and taurine yielding the corresponding guanidine derivatives. Catalyzes the rate-limiting step of creatine biosynthesis, namely the transfer of the amidino group from L-arginine to glycine to generate guanidinoacetate, which is then methylated by GAMT to form creatine. Provides creatine as a source for ATP generation in tissues with high energy demands, in particular skeletal muscle, heart and brain. This chain is Glycine amidinotransferase, mitochondrial (GATM), found in Pongo abelii (Sumatran orangutan).